Consider the following 54-residue polypeptide: Large ribosomal subunit protein bL33 (54 aa).

The protein belongs to the bacterial ribosomal protein bL33 family.

The polypeptide is Large ribosomal subunit protein bL33 (Stenotrophomonas maltophilia (strain R551-3)).